The following is a 421-amino-acid chain: Shaggy-related protein kinase kappa (421 aa).

Positions Met1–Val10 are enriched in gly residues. A disordered region spans residues Met1–Ala60. The segment covering Leu29–Val42 has biased composition (basic and acidic residues). The span at Glu43–Ile54 shows a compositional bias: acidic residues. One can recognise a Protein kinase domain in the interval Tyr83–Phe367. Residues Val89–Val97 and Lys112 each bind ATP. Asp208 (proton acceptor) is an active-site residue. Tyr243 carries the post-translational modification Phosphotyrosine.

It belongs to the protein kinase superfamily. CMGC Ser/Thr protein kinase family. GSK-3 subfamily. In terms of processing, autophosphorylated mainly on threonine and serine residues. Expressed exclusively in inflorescences.

It carries out the reaction L-seryl-[protein] + ATP = O-phospho-L-seryl-[protein] + ADP + H(+). The enzyme catalyses L-threonyl-[protein] + ATP = O-phospho-L-threonyl-[protein] + ADP + H(+). In terms of biological role, may mediate extracellular signals to regulate transcription in differentiating cells. This Arabidopsis thaliana (Mouse-ear cress) protein is Shaggy-related protein kinase kappa (ASK10).